Reading from the N-terminus, the 242-residue chain is Demethylmenaquinone methyltransferase (242 aa).

Residues T62, D83, and 112–113 (DV) contribute to the S-adenosyl-L-methionine site.

The protein belongs to the class I-like SAM-binding methyltransferase superfamily. MenG/UbiE family.

The catalysed reaction is a 2-demethylmenaquinol + S-adenosyl-L-methionine = a menaquinol + S-adenosyl-L-homocysteine + H(+). It functions in the pathway quinol/quinone metabolism; menaquinone biosynthesis; menaquinol from 1,4-dihydroxy-2-naphthoate: step 2/2. Methyltransferase required for the conversion of demethylmenaquinol (DMKH2) to menaquinol (MKH2). This chain is Demethylmenaquinone methyltransferase, found in Protochlamydia amoebophila (strain UWE25).